A 396-amino-acid chain; its full sequence is GDSL esterase/lipase ACHE (396 aa).

The first 31 residues, 1 to 31 (MATAATATAGSRAAVLLLLSLALALALRPSD), serve as a signal peptide directing secretion. Serine 49 functions as the Nucleophile in the catalytic mechanism. N-linked (GlcNAc...) asparagine glycosylation is found at asparagine 108, asparagine 126, asparagine 151, asparagine 196, and asparagine 339. Catalysis depends on residues aspartate 359 and histidine 362.

Belongs to the 'GDSL' lipolytic enzyme family.

The protein resides in the secreted. Esterase that can hydrolyze acetylthiocholine and propionylthiocholine in vitro. Substrate preference is propionylthiocholine &gt; acetylthiocholine. Possesses extremely low activity against butyrylthiocholine. This chain is GDSL esterase/lipase ACHE, found in Zea mays (Maize).